The sequence spans 398 residues: Phosphoglycerate kinase (398 aa).

Residues 21-23 (DFN), Arg-36, 59-62 (HLGR), Arg-119, and Arg-157 contribute to the substrate site. Residues Lys-208, Gly-296, Glu-327, and 354-357 (GGDS) each bind ATP.

Belongs to the phosphoglycerate kinase family. Monomer.

It is found in the cytoplasm. The enzyme catalyses (2R)-3-phosphoglycerate + ATP = (2R)-3-phospho-glyceroyl phosphate + ADP. It participates in carbohydrate degradation; glycolysis; pyruvate from D-glyceraldehyde 3-phosphate: step 2/5. In Streptococcus pyogenes serotype M5 (strain Manfredo), this protein is Phosphoglycerate kinase.